Here is a 319-residue protein sequence, read N- to C-terminus: Methionyl-tRNA formyltransferase (319 aa).

112 to 115 is a (6S)-5,6,7,8-tetrahydrofolate binding site; that stretch reads SILP.

It belongs to the Fmt family.

The catalysed reaction is L-methionyl-tRNA(fMet) + (6R)-10-formyltetrahydrofolate = N-formyl-L-methionyl-tRNA(fMet) + (6S)-5,6,7,8-tetrahydrofolate + H(+). Its function is as follows. Attaches a formyl group to the free amino group of methionyl-tRNA(fMet). The formyl group appears to play a dual role in the initiator identity of N-formylmethionyl-tRNA by promoting its recognition by IF2 and preventing the misappropriation of this tRNA by the elongation apparatus. This is Methionyl-tRNA formyltransferase from Shewanella denitrificans (strain OS217 / ATCC BAA-1090 / DSM 15013).